The chain runs to 427 residues: Tol-Pal system protein TolB (427 aa).

The signal sequence occupies residues 1-25; that stretch reads MKTFAQLRLLLAAAALALLSFSAQA.

Belongs to the TolB family. As to quaternary structure, the Tol-Pal system is composed of five core proteins: the inner membrane proteins TolA, TolQ and TolR, the periplasmic protein TolB and the outer membrane protein Pal. They form a network linking the inner and outer membranes and the peptidoglycan layer.

It is found in the periplasm. In terms of biological role, part of the Tol-Pal system, which plays a role in outer membrane invagination during cell division and is important for maintaining outer membrane integrity. The protein is Tol-Pal system protein TolB of Azoarcus sp. (strain BH72).